Reading from the N-terminus, the 159-residue chain is Putative ribosomal RNA large subunit methyltransferase H (159 aa).

S-adenosyl-L-methionine-binding positions include Leu-76, Gly-108, and 127 to 132 (FSKMTF).

Belongs to the RNA methyltransferase RlmH family.

It is found in the cytoplasm. The catalysed reaction is pseudouridine(1915) in 23S rRNA + S-adenosyl-L-methionine = N(3)-methylpseudouridine(1915) in 23S rRNA + S-adenosyl-L-homocysteine + H(+). Specifically methylates the pseudouridine at position 1915 (m3Psi1915) in 23S rRNA. The chain is Putative ribosomal RNA large subunit methyltransferase H from Methanococcus maripaludis (strain DSM 14266 / JCM 13030 / NBRC 101832 / S2 / LL).